The primary structure comprises 64 residues: Conotoxin Cal6.24 (64 aa).

An N-terminal signal peptide occupies residues 1–22; it reads MKLTCVMIVAVLVLTVCKVVTS. 3 disulfide bridges follow: C32-C50, C40-C54, and C49-C60.

As to expression, expressed by the venom duct.

Its subcellular location is the secreted. Functionally, probable neurotoxin. This chain is Conotoxin Cal6.24, found in Californiconus californicus (California cone).